Here is a 157-residue protein sequence, read N- to C-terminus: uncharacterized protein (157 aa).

Helical transmembrane passes span 3–23 (IFSF…MFIS), 24–44 (AFLS…ALAV), 47–67 (LMLG…ATAG), and 105–125 (IALL…IAGW).

To E.coli YqaA.

The protein resides in the cell membrane. This is an uncharacterized protein from Haemophilus influenzae (strain ATCC 51907 / DSM 11121 / KW20 / Rd).